Consider the following 414-residue polypeptide: Sec-independent protein translocase protein TatC (414 aa).

The disordered stretch occupies residues 1 to 21; it reads MTQSTSVSKGGRVSRKAKKNP. Helical transmembrane passes span 45–65, 119–139, 157–177, 200–220, 238–258, and 259–279; these read IAVT…AWAI, GGLA…WRFI, IAGF…PMGL, FVIA…FTAM, IMIV…DPIS, and MLVL…FTRI. Positions 315 to 414 are disordered; sequence IYDGDHKGIA…IQSSSFDDVL (100 aa). Over residues 323 to 336 the composition is skewed to gly residues; the sequence is IAGGGDAHPAGGSG. Residues 345 to 357 show a composition bias toward low complexity; that stretch reads TAPTRAPSASESP. Over residues 403–414 the composition is skewed to polar residues; it reads DTIQSSSFDDVL.

This sequence belongs to the TatC family. The Tat system comprises two distinct complexes: a TatABC complex, containing multiple copies of TatA, TatB and TatC subunits, and a separate TatA complex, containing only TatA subunits. Substrates initially bind to the TatABC complex, which probably triggers association of the separate TatA complex to form the active translocon.

It is found in the cell membrane. Functionally, part of the twin-arginine translocation (Tat) system that transports large folded proteins containing a characteristic twin-arginine motif in their signal peptide across membranes. Together with TatB, TatC is part of a receptor directly interacting with Tat signal peptides. This Corynebacterium kroppenstedtii (strain DSM 44385 / JCM 11950 / CIP 105744 / CCUG 35717) protein is Sec-independent protein translocase protein TatC.